A 497-amino-acid polypeptide reads, in one-letter code: MVSEFPGPGSRVPWRPRDEALRVNVGGVRRLLSARALARFPGTRLGRLQAAASEEQARRLCDDYDAAAHEFYFDRHPGFFLGLLHFYRTGHLHVLDELCVFAFGQEADYWGLGENALATCCRARYLERRVARPRAWDEDSDAPSSVDPCPDEISDVQRELARYGAARCGRLRRRLWLTMENPGYSLPSKLFSCVSIGVVLASIAAMCIHSLPEYQAREAAAAVAAVAAGRSAEEVRDDPVLRRLEYFCIAWFSFEVSSRLLLAPSTRNFFCHPLNLIDIVSVLPFYLTLLAGAALGDQRGASGEELGDLGKVVQVFRLMRIFRVLKLARHSTGLRSLGATLKHSYREVGILLLYLAVGVSVFSGVAYTAEEENEGFHTIPACWWWGTVSMTTVGYGDVVPETVGGKLAASGCILGGILVVALPITIIFNKFSHFYRRQKALEAAVRSSGQREFEDLLSSVDGVSDVSLETSRDTSQEGRSTDLETQAPREPAKSHSY.

Over 1-186 the chain is Cytoplasmic; the sequence is MVSEFPGPGS…LTMENPGYSL (186 aa). Residues 187–208 form a helical membrane-spanning segment; sequence PSKLFSCVSIGVVLASIAAMCI. Residues 209 to 239 are Extracellular-facing; it reads HSLPEYQAREAAAAVAAVAAGRSAEEVRDDP. A helical transmembrane segment spans residues 240 to 262; that stretch reads VLRRLEYFCIAWFSFEVSSRLLL. The Cytoplasmic portion of the chain corresponds to 263 to 273; sequence APSTRNFFCHP. A helical membrane pass occupies residues 274-291; the sequence is LNLIDIVSVLPFYLTLLA. The Extracellular segment spans residues 292–309; that stretch reads GAALGDQRGASGEELGDL. The helical; Voltage-sensor transmembrane segment at 310 to 330 threads the bilayer; the sequence is GKVVQVFRLMRIFRVLKLARH. The Cytoplasmic segment spans residues 331 to 345; the sequence is STGLRSLGATLKHSY. Residues 346-367 traverse the membrane as a helical segment; it reads REVGILLLYLAVGVSVFSGVAY. The Extracellular portion of the chain corresponds to 368–379; the sequence is TAEEENEGFHTI. The helical intramembrane region spans 380 to 391; that stretch reads PACWWWGTVSMT. Positions 392–397 match the Selectivity filter motif; it reads TVGYGD. Residues 392-399 lie within the membrane without spanning it; that stretch reads TVGYGDVV. Over 400–406 the chain is Extracellular; it reads PETVGGK. The helical transmembrane segment at 407 to 435 threads the bilayer; that stretch reads LAASGCILGGILVVALPITIIFNKFSHFY. The Cytoplasmic portion of the chain corresponds to 436–497; the sequence is RRQKALEAAV…PREPAKSHSY (62 aa). The tract at residues 464-497 is disordered; it reads SDVSLETSRDTSQEGRSTDLETQAPREPAKSHSY. Residues 470-482 are compositionally biased toward basic and acidic residues; the sequence is TSRDTSQEGRSTD.

It belongs to the potassium channel family. S (TC 1.A.1.2) subfamily. Kv9.1/KCNS1 sub-subfamily. Heterotetramer with KCNB1 and KCNB2. Does not form homomultimers. Detected in brain, but not in the other tissues tested. The highest levels of expression are in olfactory bulb, cerebral cortex, hippocampus, habenula, basolateral amygdaloid nuclei and cerebellum.

The protein localises to the cell membrane. Potassium channel regulatory subunit that modulate the delayed rectifier voltage-gated potassium channel activity of KCNB1 and KCNB2 by altering their kinetics, expression levels, and shifting the half-inactivation potential to more polarized values. While it does not form functional channels on its own, it can form functional heterotetrameric channels with KCNB1 and KCNB2. Each regulatory subunit has unique regulatory properties that can lead to extensive inhibition, significant changes in kinetics, and/or substantial shifts in the voltage dependencies of the inactivation process. This chain is Delayed-rectifier potassium channel regulatory subunit KCNS1, found in Mus musculus (Mouse).